The sequence spans 591 residues: Aspartate--tRNA ligase (591 aa).

An L-aspartate-binding site is contributed by E172. The tract at residues 196-199 is aspartate; sequence QLFK. R218 provides a ligand contact to L-aspartate. Residues 218 to 220 and Q227 each bind ATP; that span reads RDE. H449 serves as a coordination point for L-aspartate. E483 provides a ligand contact to ATP. R490 contacts L-aspartate. 535–538 contributes to the ATP binding site; the sequence is GLDR.

It belongs to the class-II aminoacyl-tRNA synthetase family. Type 1 subfamily. As to quaternary structure, homodimer.

Its subcellular location is the cytoplasm. The catalysed reaction is tRNA(Asp) + L-aspartate + ATP = L-aspartyl-tRNA(Asp) + AMP + diphosphate. Catalyzes the attachment of L-aspartate to tRNA(Asp) in a two-step reaction: L-aspartate is first activated by ATP to form Asp-AMP and then transferred to the acceptor end of tRNA(Asp). The sequence is that of Aspartate--tRNA ligase from Actinobacillus pleuropneumoniae serotype 5b (strain L20).